Reading from the N-terminus, the 275-residue chain is Putative phosphoenolpyruvate synthase regulatory protein (275 aa).

Residue 153–160 (GVSRSGKT) participates in ADP binding.

The protein belongs to the pyruvate, phosphate/water dikinase regulatory protein family. PSRP subfamily.

The catalysed reaction is [pyruvate, water dikinase] + ADP = [pyruvate, water dikinase]-phosphate + AMP + H(+). It catalyses the reaction [pyruvate, water dikinase]-phosphate + phosphate + H(+) = [pyruvate, water dikinase] + diphosphate. In terms of biological role, bifunctional serine/threonine kinase and phosphorylase involved in the regulation of the phosphoenolpyruvate synthase (PEPS) by catalyzing its phosphorylation/dephosphorylation. The polypeptide is Putative phosphoenolpyruvate synthase regulatory protein (Nitrosomonas eutropha (strain DSM 101675 / C91 / Nm57)).